The following is a 110-amino-acid chain: UPF0122 protein BcerKBAB4_3669 (110 aa).

The protein belongs to the UPF0122 family.

Might take part in the signal recognition particle (SRP) pathway. This is inferred from the conservation of its genetic proximity to ftsY/ffh. May be a regulatory protein. The sequence is that of UPF0122 protein BcerKBAB4_3669 from Bacillus mycoides (strain KBAB4) (Bacillus weihenstephanensis).